The sequence spans 170 residues: RNA pyrophosphohydrolase (170 aa).

Positions 9–162 constitute a Nudix hydrolase domain; the sequence is PYRPCAGIMV…KRAVYEKVVA (154 aa). A Nudix box motif is present at residues 50-71; the sequence is GGIDDGERPLTAAIRELYEETG.

Belongs to the Nudix hydrolase family. RppH subfamily. Requires a divalent metal cation as cofactor.

Its function is as follows. Accelerates the degradation of transcripts by removing pyrophosphate from the 5'-end of triphosphorylated RNA, leading to a more labile monophosphorylated state that can stimulate subsequent ribonuclease cleavage. This is RNA pyrophosphohydrolase from Agrobacterium fabrum (strain C58 / ATCC 33970) (Agrobacterium tumefaciens (strain C58)).